A 400-amino-acid polypeptide reads, in one-letter code: Subtilisin-like protease 2 (400 aa).

The first 20 residues, 1-20 (MKFSQSLIALAACFLPLIAA), serve as a signal peptide directing secretion. A propeptide spanning residues 21 to 119 (APEEAQHAKI…IERDGKVQAN (99 aa)) is cleaved from the precursor. Residues 42 to 117 (SYIVVFNKGV…AWIERDGKVQ (76 aa)) enclose the Inhibitor I9 domain. The N-linked (GlcNAc...) asparagine glycan is linked to asparagine 82. The Peptidase S8 domain maps to 128–400 (TWGLGRISHK…NLIAYNGNGA (273 aa)). Catalysis depends on charge relay system residues aspartate 160, histidine 192, and serine 345.

This sequence belongs to the peptidase S8 family.

It is found in the secreted. Potently inhibited by the serine peptidase inhibitor chymostatin. Also inhibited by antpain and PMSF. Functionally, major secreted subtilisin-like serine endopeptidase. Preferentially cleaves substrates containing hydrophobic residues at P4, positively charged residues at P3, small or flexible residues at P2, and large, bulky residues at P1. Mediates the degradation of collagen, the major structural protein in the mammalian host. Degrades the nonhelical regions of collagen that function in the cross-linking of the helical components. May function as virulence factor involved in epidermal wing necrosis observed in white nose syndrome (WNS) in bats. This chain is Subtilisin-like protease 2, found in Pseudogymnoascus destructans (strain ATCC MYA-4855 / 20631-21) (Bat white-nose syndrome fungus).